A 168-amino-acid chain; its full sequence is RxLR effector protein CRE8 (168 aa).

A signal peptide spans 1–23 (MRLPSILVVAASTLFLHYGYTSA). Residues 54–69 (RFLRDGKIAEGDNEER) carry the RxLR-dEER motif.

Belongs to the RxLR effector family.

It is found in the secreted. It localises to the host cell. Effector that is involved in host plant infection. Contributes to virulence during the early infection stage, by inhibiting plant defense responses induced by both PAMP-triggered immunity (PTI) and effector-triggered immunity (ETI). The polypeptide is RxLR effector protein CRE8 (Phytophthora infestans (strain T30-4) (Potato late blight agent)).